The primary structure comprises 502 residues: ATP synthase subunit alpha (502 aa).

ATP is bound at residue 169–176 (GDKQTGKT).

The protein belongs to the ATPase alpha/beta chains family. As to quaternary structure, F-type ATPases have 2 components, CF(1) - the catalytic core - and CF(0) - the membrane proton channel. CF(1) has five subunits: alpha(3), beta(3), gamma(1), delta(1), epsilon(1). CF(0) has three main subunits: a(1), b(2) and c(9-12). The alpha and beta chains form an alternating ring which encloses part of the gamma chain. CF(1) is attached to CF(0) by a central stalk formed by the gamma and epsilon chains, while a peripheral stalk is formed by the delta and b chains.

The protein localises to the cell membrane. It catalyses the reaction ATP + H2O + 4 H(+)(in) = ADP + phosphate + 5 H(+)(out). In terms of biological role, produces ATP from ADP in the presence of a proton gradient across the membrane. The alpha chain is a regulatory subunit. This Lachnoclostridium phytofermentans (strain ATCC 700394 / DSM 18823 / ISDg) (Clostridium phytofermentans) protein is ATP synthase subunit alpha.